The sequence spans 396 residues: Lipopolysaccharide assembly protein B (396 aa).

A helical membrane pass occupies residues 1 to 20 (MIELLFLLLPIAAAYGWYMG). At 21–396 (RRSAKKDQDD…IKPVSNQEHN (376 aa)) the chain is on the cytoplasmic side. TPR repeat units lie at residues 35 to 68 (LSRD…QEIE), 77 to 109 (FEAE…SPNY), 149 to 182 (ENAL…KPQE), and 221 to 254 (VRAS…NPDY). The Fe cation site is built by Cys-364, Cys-367, Cys-378, and Cys-381.

It belongs to the LapB family.

The protein resides in the cell inner membrane. Its function is as follows. Modulates cellular lipopolysaccharide (LPS) levels by regulating LpxC, which is involved in lipid A biosynthesis. May act by modulating the proteolytic activity of FtsH towards LpxC. May also coordinate assembly of proteins involved in LPS synthesis at the plasma membrane. The protein is Lipopolysaccharide assembly protein B of Haemophilus influenzae (strain ATCC 51907 / DSM 11121 / KW20 / Rd).